Here is a 250-residue protein sequence, read N- to C-terminus: Ribosome-inactivating protein luffin-B (250 aa).

The active site involves Glu-160.

The protein belongs to the ribosome-inactivating protein family. Type 1 RIP subfamily.

It catalyses the reaction Endohydrolysis of the N-glycosidic bond at one specific adenosine on the 28S rRNA.. This is Ribosome-inactivating protein luffin-B from Luffa aegyptiaca (Sponge gourd).